Reading from the N-terminus, the 231-residue chain is Flagellar L-ring protein (231 aa).

The first 18 residues, 1–18 (MNRLMIVSLLGIATVLGG), serve as a signal peptide directing secretion. Residue Cys19 is the site of N-palmitoyl cysteine attachment. Cys19 carries the S-diacylglycerol cysteine lipid modification. The tract at residues 118 to 141 (LSLSAEYGGSRDAKGDSQAGQSNS) is disordered.

It belongs to the FlgH family. In terms of assembly, the basal body constitutes a major portion of the flagellar organelle and consists of four rings (L,P,S, and M) mounted on a central rod.

The protein resides in the cell outer membrane. It is found in the bacterial flagellum basal body. Functionally, assembles around the rod to form the L-ring and probably protects the motor/basal body from shearing forces during rotation. This chain is Flagellar L-ring protein, found in Pseudomonas paraeruginosa (strain DSM 24068 / PA7) (Pseudomonas aeruginosa (strain PA7)).